The chain runs to 640 residues: Threonine--tRNA ligase (640 aa).

A TGS domain is found at 1–61; that stretch reads MPIITLPDGS…ERDATLQIIT (61 aa). Positions 242-533 are catalytic; the sequence is DHRRIGKQLD…LIEHYAGAFP (292 aa). Zn(2+) is bound by residues Cys333, His384, and His510.

The protein belongs to the class-II aminoacyl-tRNA synthetase family. Homodimer. Requires Zn(2+) as cofactor.

The protein localises to the cytoplasm. The enzyme catalyses tRNA(Thr) + L-threonine + ATP = L-threonyl-tRNA(Thr) + AMP + diphosphate + H(+). Its function is as follows. Catalyzes the attachment of threonine to tRNA(Thr) in a two-step reaction: L-threonine is first activated by ATP to form Thr-AMP and then transferred to the acceptor end of tRNA(Thr). Also edits incorrectly charged L-seryl-tRNA(Thr). The sequence is that of Threonine--tRNA ligase from Pseudomonas paraeruginosa (strain DSM 24068 / PA7) (Pseudomonas aeruginosa (strain PA7)).